Reading from the N-terminus, the 260-residue chain is Membrane protein insertase YidC 1 (260 aa).

The signal sequence occupies residues 1–22; it reads MLKSYRAVLVSLSLLFVFVLSG. The N-palmitoyl cysteine moiety is linked to residue Cys23. The S-diacylglycerol cysteine moiety is linked to residue Cys23. 5 helical membrane passes run 29–49, 52–72, 133–153, 164–184, and 213–233; these read IDAH…SFMI, VAHH…TLVI, LAGC…YYAI, FLWV…IAAL, and MPAM…LYWI.

Belongs to the OXA1/ALB3/YidC family. Type 2 subfamily.

It is found in the cell membrane. Functionally, required for the insertion and/or proper folding and/or complex formation of integral membrane proteins into the membrane. Involved in integration of membrane proteins that insert both dependently and independently of the Sec translocase complex, as well as at least some lipoproteins. The sequence is that of Membrane protein insertase YidC 1 from Bacillus cereus (strain ATCC 14579 / DSM 31 / CCUG 7414 / JCM 2152 / NBRC 15305 / NCIMB 9373 / NCTC 2599 / NRRL B-3711).